The primary structure comprises 362 residues: Phosphoserine aminotransferase (362 aa).

The L-glutamate site is built by Ser-9 and Arg-42. Pyridoxal 5'-phosphate is bound by residues 76–77 (GR), Trp-102, Thr-153, Asp-174, and Gln-197. Lys-198 carries the N6-(pyridoxal phosphate)lysine modification. 239 to 240 (NT) serves as a coordination point for pyridoxal 5'-phosphate.

Belongs to the class-V pyridoxal-phosphate-dependent aminotransferase family. SerC subfamily. As to quaternary structure, homodimer. Pyridoxal 5'-phosphate serves as cofactor.

It is found in the cytoplasm. It catalyses the reaction O-phospho-L-serine + 2-oxoglutarate = 3-phosphooxypyruvate + L-glutamate. It carries out the reaction 4-(phosphooxy)-L-threonine + 2-oxoglutarate = (R)-3-hydroxy-2-oxo-4-phosphooxybutanoate + L-glutamate. The protein operates within amino-acid biosynthesis; L-serine biosynthesis; L-serine from 3-phospho-D-glycerate: step 2/3. It functions in the pathway cofactor biosynthesis; pyridoxine 5'-phosphate biosynthesis; pyridoxine 5'-phosphate from D-erythrose 4-phosphate: step 3/5. Functionally, catalyzes the reversible conversion of 3-phosphohydroxypyruvate to phosphoserine and of 3-hydroxy-2-oxo-4-phosphonooxybutanoate to phosphohydroxythreonine. This chain is Phosphoserine aminotransferase, found in Salmonella newport (strain SL254).